The chain runs to 362 residues: Peptide chain release factor 1 (362 aa).

Q237 carries the post-translational modification N5-methylglutamine. The interval 289–308 is disordered; it reads AAEISDTRRNLLGSGDRSDR.

The protein belongs to the prokaryotic/mitochondrial release factor family. In terms of processing, methylated by PrmC. Methylation increases the termination efficiency of RF1.

It localises to the cytoplasm. Its function is as follows. Peptide chain release factor 1 directs the termination of translation in response to the peptide chain termination codons UAG and UAA. In Vibrio cholerae serotype O1 (strain ATCC 39541 / Classical Ogawa 395 / O395), this protein is Peptide chain release factor 1.